Consider the following 209-residue polypeptide: Ribosomal RNA large subunit methyltransferase E (209 aa).

Residues G63, W65, D83, D99, and D124 each coordinate S-adenosyl-L-methionine. Catalysis depends on K164, which acts as the Proton acceptor.

This sequence belongs to the class I-like SAM-binding methyltransferase superfamily. RNA methyltransferase RlmE family.

The protein localises to the cytoplasm. It carries out the reaction uridine(2552) in 23S rRNA + S-adenosyl-L-methionine = 2'-O-methyluridine(2552) in 23S rRNA + S-adenosyl-L-homocysteine + H(+). Functionally, specifically methylates the uridine in position 2552 of 23S rRNA at the 2'-O position of the ribose in the fully assembled 50S ribosomal subunit. The polypeptide is Ribosomal RNA large subunit methyltransferase E (Aeromonas salmonicida (strain A449)).